Reading from the N-terminus, the 29-residue chain is Cyclotide cter-N (29 aa).

A cross-link (cyclopeptide (Gly-Asn)) is located at residues G1–N29. 3 cysteine pairs are disulfide-bonded: C5–C19, C9–C21, and C14–C26.

Post-translationally, this is a cyclic peptide.

It is found in the secreted. Probably participates in a plant defense mechanism. The protein is Cyclotide cter-N of Clitoria ternatea (Butterfly pea).